The chain runs to 520 residues: 2-isopropylmalate synthase (520 aa).

A Pyruvate carboxyltransferase domain is found at 4-266 (VEFLDTTLRD…TSDIVLNETV (263 aa)). Aspartate 13, histidine 201, histidine 203, and asparagine 237 together coordinate Mn(2+). A regulatory domain region spans residues 390-520 (HFGDLKLTSN…AVSFRDVPTN (131 aa)).

This sequence belongs to the alpha-IPM synthase/homocitrate synthase family. LeuA type 1 subfamily. As to quaternary structure, homodimer. It depends on Mn(2+) as a cofactor.

It localises to the cytoplasm. It catalyses the reaction 3-methyl-2-oxobutanoate + acetyl-CoA + H2O = (2S)-2-isopropylmalate + CoA + H(+). It participates in amino-acid biosynthesis; L-leucine biosynthesis; L-leucine from 3-methyl-2-oxobutanoate: step 1/4. Its function is as follows. Catalyzes the condensation of the acetyl group of acetyl-CoA with 3-methyl-2-oxobutanoate (2-ketoisovalerate) to form 3-carboxy-3-hydroxy-4-methylpentanoate (2-isopropylmalate). In Streptococcus gallolyticus (strain UCN34), this protein is 2-isopropylmalate synthase.